The primary structure comprises 226 residues: MEPGFWHSKWDTQQIGFHQNEVNPLLIKYWPRLNLNNLVNTSVFVPLCGKTLDICFLAELGHEVIGCELNETAVEHFFTENDLSYSTSRVGELQKFATEQVSIYQGDLFSLSHEALSSQEHRTIGAFYDRAALIAWPEEMRQDYVQKLAALIPPKSIGLLVTLDYPQEALKGPPFAVSNDWIMANMAEFFEVEILSCEDVLSENPRFIKKEVPWLTESVYRLIRRG.

S-adenosyl-L-methionine is bound by residues Trp10, Leu47, Glu68, and Arg130.

Belongs to the class I-like SAM-binding methyltransferase superfamily. TPMT family.

It is found in the cytoplasm. It catalyses the reaction S-adenosyl-L-methionine + a thiopurine = S-adenosyl-L-homocysteine + a thiopurine S-methylether.. This Shewanella sediminis (strain HAW-EB3) protein is Thiopurine S-methyltransferase.